Here is a 283-residue protein sequence, read N- to C-terminus: Shikimate kinase (283 aa).

86–96 (PIKSGLSSSSA) serves as a coordination point for ATP.

The protein belongs to the GHMP kinase family. Archaeal shikimate kinase subfamily.

It is found in the cytoplasm. The catalysed reaction is shikimate + ATP = 3-phosphoshikimate + ADP + H(+). The protein operates within metabolic intermediate biosynthesis; chorismate biosynthesis; chorismate from D-erythrose 4-phosphate and phosphoenolpyruvate: step 5/7. This Methanococcus maripaludis (strain C6 / ATCC BAA-1332) protein is Shikimate kinase.